The primary structure comprises 210 residues: Probable nicotinate-nucleotide adenylyltransferase (210 aa).

Belongs to the NadD family.

It catalyses the reaction nicotinate beta-D-ribonucleotide + ATP + H(+) = deamido-NAD(+) + diphosphate. It participates in cofactor biosynthesis; NAD(+) biosynthesis; deamido-NAD(+) from nicotinate D-ribonucleotide: step 1/1. Its function is as follows. Catalyzes the reversible adenylation of nicotinate mononucleotide (NaMN) to nicotinic acid adenine dinucleotide (NaAD). The sequence is that of Probable nicotinate-nucleotide adenylyltransferase from Streptococcus pyogenes serotype M1.